A 385-amino-acid polypeptide reads, in one-letter code: Deoxyguanosinetriphosphate triphosphohydrolase-like protein (385 aa).

Over residues 1-14 (MTEGVEGRSQERSD) the composition is skewed to basic and acidic residues. A disordered region spans residues 1–23 (MTEGVEGRSQERSDLAGFAARSA). An HD domain is found at 75–204 (RLTHSLEVAQ…INYADEIAYN (130 aa)).

This sequence belongs to the dGTPase family. Type 2 subfamily.

This Geobacter metallireducens (strain ATCC 53774 / DSM 7210 / GS-15) protein is Deoxyguanosinetriphosphate triphosphohydrolase-like protein.